The sequence spans 186 residues: MNHTPILNKKNLIWIDLEMTGLNLENDRIIEIATVITDKYVKILAEGPSIAIFQSEEQLKKMNSWNIFTHTKNGLIDRVRKSKYNEKNAMIDTLKFISSWVPFGKSPICGSSINHDRLFLSKYMPDLEKYFHYRCLDVSVIKELARRWKPKILSKLKKKHTHKALDDIKDSIKELLFYKDTFIKLN.

An Exonuclease domain is found at Leu12 to Leu175. The active site involves Tyr133.

Belongs to the oligoribonuclease family.

Its subcellular location is the cytoplasm. Its function is as follows. 3'-to-5' exoribonuclease specific for small oligoribonucleotides. This Wigglesworthia glossinidia brevipalpis protein is Oligoribonuclease.